The following is an 891-amino-acid chain: Kinesin-like protein KIN-UB (891 aa).

Residues 1–54 (MSGKVANATPKAAAGKPRLSAAGGGAYRRTSSGPLPSAGGGGGRASSESGVSSR) form a disordered region. The segment covering 45–54 (ASSESGVSSR) has biased composition (low complexity). The 347-residue stretch at 54–400 (RVRVAVRLRP…IMFGQRAMKV (347 aa)) folds into the Kinesin motor domain. ATP is bound at residue 139–146 (GQTGTGKT). The D-BOX motif lies at 370–378 (RTSLVVTIG). A coiled-coil region spans residues 502–592 (TSSEVGEVQN…ADETRRSLDR (91 aa)). A compositionally biased stretch (basic and acidic residues) spans 586-595 (TRRSLDRGDG). Residues 586 to 626 (TRRSLDRGDGSGKIFPGFDSLMSHSRNSQPREQSNGPKPPI) are disordered. The segment covering 607–621 (MSHSRNSQPREQSNG) has biased composition (polar residues). 4 ARM repeats span residues 623–662 (KPPI…NLAA), 664–704 (EANQ…NLAM), 706–746 (ETNQ…NLCG), and 748–787 (DKLQ…NFAK).

This sequence belongs to the TRAFAC class myosin-kinesin ATPase superfamily. Kinesin family. Ungrouped subfamily.

The protein localises to the cytoplasm. Its subcellular location is the cytoskeleton. This chain is Kinesin-like protein KIN-UB, found in Oryza sativa subsp. japonica (Rice).